Here is a 355-residue protein sequence, read N- to C-terminus: S-adenosylmethionine:tRNA ribosyltransferase-isomerase (355 aa).

The protein belongs to the QueA family. As to quaternary structure, monomer.

Its subcellular location is the cytoplasm. The enzyme catalyses 7-aminomethyl-7-carbaguanosine(34) in tRNA + S-adenosyl-L-methionine = epoxyqueuosine(34) in tRNA + adenine + L-methionine + 2 H(+). The protein operates within tRNA modification; tRNA-queuosine biosynthesis. Functionally, transfers and isomerizes the ribose moiety from AdoMet to the 7-aminomethyl group of 7-deazaguanine (preQ1-tRNA) to give epoxyqueuosine (oQ-tRNA). This Pectobacterium atrosepticum (strain SCRI 1043 / ATCC BAA-672) (Erwinia carotovora subsp. atroseptica) protein is S-adenosylmethionine:tRNA ribosyltransferase-isomerase.